The following is a 126-amino-acid chain: Large-conductance mechanosensitive channel (126 aa).

The next 2 helical transmembrane spans lie at 17–37 (VDLAVGVIIGAAFGKIVSSFI) and 70–90 (GLFLSAVINFIIVAFVLFLII).

It belongs to the MscL family. Homopentamer.

Its subcellular location is the cell inner membrane. Channel that opens in response to stretch forces in the membrane lipid bilayer. May participate in the regulation of osmotic pressure changes within the cell. This chain is Large-conductance mechanosensitive channel, found in Flavobacterium johnsoniae (strain ATCC 17061 / DSM 2064 / JCM 8514 / BCRC 14874 / CCUG 350202 / NBRC 14942 / NCIMB 11054 / UW101) (Cytophaga johnsonae).